The following is a 164-amino-acid chain: uncharacterized protein (164 aa).

This is an uncharacterized protein from Arabidopsis thaliana (Mouse-ear cress).